Reading from the N-terminus, the 425-residue chain is SWI/SNF and RSC complexes subunit ssr3 (425 aa).

Residues 1 to 16 (MSNNSRLPENGVQSGN) show a composition bias toward polar residues. Residues 1–23 (MSNNSRLPENGVQSGNGEDAELK) form a disordered region. In terms of domain architecture, SWIB/MDM2 spans 201 to 278 (EHPERYKLSK…PELMNRFLEP (78 aa)).

The protein belongs to the SMARCD family. As to quaternary structure, component of the RSC complex composed of at least arp9, arp42, rsc1, rsc4, rsc7, rsc9, rsc58, sfh1, snf21, ssr1, ssr2, ssr3 and ssr4. The complex interacts with histone and histone variant components of centromeric chromatin. Component of the SWI/SNF global transcription activator complex composed of at least arp9, arp42, snf5, snf22, snf30, sbf59, sol1, ssr1, ssr2, ssr3, ssr4 and tfg3.

It localises to the cytoplasm. The protein resides in the nucleus. Its function is as follows. Component of the chromatin structure remodeling complex (RSC), which is involved in transcription regulation and nucleosome positioning. Controls particularly membrane and organelle development genes. Part of the SWI/SNF complex, an ATP-dependent chromatin remodeling complex, required for the positive and negative regulation of gene expression of a large number of genes. It changes chromatin structure by altering DNA-histone contacts within a nucleosome, leading eventually to a change in nucleosome position, thus facilitating or repressing binding of gene-specific transcription factors. The chain is SWI/SNF and RSC complexes subunit ssr3 (ssr3) from Schizosaccharomyces pombe (strain 972 / ATCC 24843) (Fission yeast).